Reading from the N-terminus, the 103-residue chain is Large ribosomal subunit protein uL24 (103 aa).

Belongs to the universal ribosomal protein uL24 family. Part of the 50S ribosomal subunit.

Functionally, one of two assembly initiator proteins, it binds directly to the 5'-end of the 23S rRNA, where it nucleates assembly of the 50S subunit. In terms of biological role, one of the proteins that surrounds the polypeptide exit tunnel on the outside of the subunit. The polypeptide is Large ribosomal subunit protein uL24 (Endomicrobium trichonymphae).